A 104-amino-acid chain; its full sequence is uncharacterized protein (104 aa).

A run of 2 helical transmembrane segments spans residues 45 to 65 (LYGI…IGVF) and 70 to 90 (LYLS…AKGL).

The protein resides in the membrane. This is an uncharacterized protein from Saccharomyces cerevisiae (strain ATCC 204508 / S288c) (Baker's yeast).